The chain runs to 217 residues: Large ribosomal subunit protein uL1 (217 aa).

The protein belongs to the universal ribosomal protein uL1 family. As to quaternary structure, part of the 50S ribosomal subunit.

Binds directly to 23S rRNA. Probably involved in E site tRNA release. In terms of biological role, protein L1 is also a translational repressor protein, it controls the translation of its operon by binding to its mRNA. The sequence is that of Large ribosomal subunit protein uL1 from Thermoplasma acidophilum (strain ATCC 25905 / DSM 1728 / JCM 9062 / NBRC 15155 / AMRC-C165).